The chain runs to 853 residues: Trimethylguanosine synthase (853 aa).

Residues 54-84 (NNAGDQGTEEEEDGHSNGTAESHSPNESDLD) are disordered. Threonine 61 carries the post-translational modification Phosphothreonine. The span at 69–80 (SNGTAESHSPNE) shows a compositional bias: polar residues. 4 positions are modified to phosphoserine: serine 81, serine 85, serine 92, and serine 139. Tyrosine 144 is subject to Phosphotyrosine. Position 152 is a phosphoserine (serine 152). 2 disordered regions span residues 328-437 (VEQS…DDNG) and 523-549 (ETSQDSLSQNKMQDTCTSSDSEEQDMS). Basic and acidic residues predominate over residues 365 to 383 (KENDISENRSSDQPAKELQ). Phosphoserine occurs at positions 405 and 431. The segment covering 424–435 (DVDENPDSEVDD) has biased composition (acidic residues). Over residues 526-541 (QDSLSQNKMQDTCTSS) the composition is skewed to polar residues. Serine 572 is modified (phosphoserine). Positions 594-623 (CSTEEIPNSPHAETEVEIKKKKKKNKNKKI) are disordered. Residues 612 to 621 (KKKKKKNKNK) are compositionally biased toward basic residues. S-adenosyl-L-methionine is bound at residue aspartate 711.

Belongs to the methyltransferase superfamily. Trimethylguanosine synthase family. In terms of assembly, may form homooligomers. Interacts with CREBBP/CBP, EED/WAIT1, EP300/P300, NCOA6/PRIP, PPARBP/PBP and SMN. Ubiquitously expressed.

The protein resides in the cytoplasm. It is found in the nucleus. The protein localises to the cajal body. Its subcellular location is the nucleolus. The enzyme catalyses a 5'-end (N(7)-methyl 5'-triphosphoguanosine)-ribonucleoside in snRNA + S-adenosyl-L-methionine = a 5'-end (N(2),N(7)-dimethyl 5'-triphosphoguanosine)-ribonucleoside in snRNA + S-adenosyl-L-homocysteine + H(+). It carries out the reaction a 5'-end (N(7)-methyl 5'-triphosphoguanosine)-ribonucleoside in snoRNA + S-adenosyl-L-methionine = a 5'-end (N(2),N(7)-dimethyl 5'-triphosphoguanosine)-ribonucleoside in snoRNA + S-adenosyl-L-homocysteine + H(+). It catalyses the reaction a 5'-end (N(2),N(7)-dimethyl 5'-triphosphoguanosine)-ribonucleoside in snRNA + S-adenosyl-L-methionine = a 5'-end (N(2),N(2),N(7)-trimethyl 5'-triphosphoguanosine)-ribonucleoside in snRNA + S-adenosyl-L-homocysteine + H(+). The catalysed reaction is a 5'-end (N(2),N(7)-dimethyl 5'-triphosphoguanosine)-ribonucleoside in snoRNA + S-adenosyl-L-methionine = a 5'-end (N(2),N(2),N(7)-trimethyl 5'-triphosphoguanosine)-ribonucleoside in snoRNA + S-adenosyl-L-homocysteine + H(+). Its function is as follows. Catalyzes the 2 serial methylation steps for the conversion of the 7-monomethylguanosine (m(7)G) caps of snRNAs and snoRNAs to a 2,2,7-trimethylguanosine (m(2,2,7)G) cap structure. The enzyme is specific for guanine, and N7 methylation must precede N2 methylation. Hypermethylation of the m7G cap of U snRNAs leads to their concentration in nuclear foci, their colocalization with coilin and the formation of canonical Cajal bodies (CBs). Plays a role in transcriptional regulation. The sequence is that of Trimethylguanosine synthase (Tgs1) from Mus musculus (Mouse).